A 91-amino-acid chain; its full sequence is uncharacterized protein (91 aa).

Transmembrane regions (helical) follow at residues 9 to 29, 44 to 64, and 71 to 91; these read VLWG…PFLP, LTVN…VFAW, and QFVF…CLAL.

The protein resides in the cell membrane. This is an uncharacterized protein from Bacillus subtilis (strain 168).